The sequence spans 397 residues: DNA excision repair protein ERCC-8 (397 aa).

WD repeat units lie at residues 41–81 (IHGS…RQPH), 97–137 (VHKY…AADV), 184–224 (GHRQ…GCLL), 243–282 (AHNGKVNGLCFTSDGLHLLTIGTDNRMRLWNSSSGDNTLV), and 332–371 (GHYKSVDCCVFQPNFQELYSGSRDCNILAWVPPSYEPVPD). 3 positions are modified to phosphoserine: serine 391, serine 392, and serine 393.

In terms of assembly, part of the CSA complex (also named DCX(ERCC8) complex), a DCX E3 ubiquitin-protein ligase complex containing ERCC8, RBX1, DDB1 and CUL4A; the CSA complex interacts with RNA polymerase II; upon UV irradiation it interacts with the COP9 signalosome and preferentially with the hyperphosphorylated form of RNA polymerase II. Interacts with ERCC6/CSB (via CIM motif); promoting recruitment to lesion-stalled RNA polymerase II (Pol II). Interacts with KIAA1530/UVSSA. Interacts with a subunit of RNA polymerase II TFIIH.

Its subcellular location is the nucleus. It localises to the chromosome. The protein resides in the nucleus matrix. It functions in the pathway protein modification; protein ubiquitination. Its function is as follows. Substrate-recognition component of the CSA complex, a DCX (DDB1-CUL4-X-box) E3 ubiquitin-protein ligase complex, involved in transcription-coupled nucleotide excision repair (TC-NER), a process during which RNA polymerase II-blocking lesions are rapidly removed from the transcribed strand of active genes. Following recruitment to lesion-stalled RNA polymerase II (Pol II), the CSA complex mediates ubiquitination of Pol II subunit POLR2A/RPB1 at 'Lys-1268', a critical TC-NER checkpoint, governing RNA Pol II stability and initiating DNA damage excision by TFIIH recruitment. The CSA complex also promotes the ubiquitination and subsequent proteasomal degradation of ERCC6/CSB in a UV-dependent manner; ERCC6 degradation is essential for the recovery of RNA synthesis after transcription-coupled repair. Also plays a role in DNA double-strand breaks (DSSBs) repair by non-homologous end joining (NHEJ). The protein is DNA excision repair protein ERCC-8 of Mus musculus (Mouse).